We begin with the raw amino-acid sequence, 206 residues long: Tektin bundle-interacting protein 1 (206 aa).

In terms of assembly, microtubule inner protein component of sperm flagellar doublet microtubules.

The protein resides in the cytoplasm. The protein localises to the cytoskeleton. It is found in the cilium axoneme. Its subcellular location is the flagellum axoneme. Its function is as follows. Microtubule inner protein (MIP) part of the dynein-decorated doublet microtubules (DMTs) in cilia axoneme, which is required for motile cilia beating. Located at the center of the tektin bundle where may function to recruit tektins or stabilize the bundle. The polypeptide is Tektin bundle-interacting protein 1 (Mus musculus (Mouse)).